The primary structure comprises 526 residues: MSVSSIADKIVSESILIVDFGSQVTQLIARRVREAGVYSEIVPFNRAEEAFQRLQPKGIILSGSPASVVAEGSPRAPESFFQAGIPIFGICYGQQVMCHQLGGKVTANDVDGEFGRAFIDVIAPSPLFENLWKVGEKHQVWMSHADRVEALPEGFKPIAVSDGAPFALIADEKRRFYGMQFHPEVVHTPDGGKLIAHFVHDICGLAGDWTMAEFRQTKIAEIRKQVGDGRVICGLSGGVDSSVTAVLVHEAIGDQLTCVFVDHGLMRQGEAEQVVSLFREHYGIKLVHVNAEDRFLAGLKGVTDPETKRKFIGKTFIEIFEEEAKKIGGADFLAQGTLYPDVIESVSFLGGPSVTIKSHHNVGGLPERMNMKLVEPLRELFKDEVRDLGRELGMPDVFVDRHPFPGPGLAIRIPGEVTKERCDILRKADAVYLEEIRNAGLYNAIWQAFAVLLPVRTVGVMGDGRTYDSVCALRAVTSTDGMTAEIYPFQPEFLANVATRIVNEVRGINRVTYDFTSKPPGTIEWE.

One can recognise a Glutamine amidotransferase type-1 domain in the interval 14–208 (SILIVDFGSQ…VHDICGLAGD (195 aa)). Cysteine 91 acts as the Nucleophile in catalysis. Active-site residues include histidine 182 and glutamate 184. Residues 209-401 (WTMAEFRQTK…LGMPDVFVDR (193 aa)) enclose the GMPS ATP-PPase domain. Residue 236–242 (SGGVDSS) coordinates ATP.

In terms of assembly, homodimer.

It carries out the reaction XMP + L-glutamine + ATP + H2O = GMP + L-glutamate + AMP + diphosphate + 2 H(+). The protein operates within purine metabolism; GMP biosynthesis; GMP from XMP (L-Gln route): step 1/1. Catalyzes the synthesis of GMP from XMP. The chain is GMP synthase [glutamine-hydrolyzing] from Zymomonas mobilis subsp. mobilis (strain ATCC 31821 / ZM4 / CP4).